Reading from the N-terminus, the 98-residue chain is Putative protein adenylyltransferase MJ1217 (98 aa).

The GSX(10)DXD motif signature appears at 31–45 (GSYAREEQKETSDID). Mg(2+)-binding residues include D43, D45, and D75.

Belongs to the MntA antitoxin family. As to quaternary structure, probably forms a complex with cognate toxin MJ1216. Requires Mg(2+) as cofactor.

The enzyme catalyses L-tyrosyl-[protein] + ATP = O-(5'-adenylyl)-L-tyrosyl-[protein] + diphosphate. The catalysed reaction is O-(5'-adenylyl)-L-tyrosyl-[protein] + ATP = O-[5'-(adenylyl-(5'-&gt;3')-adenylyl)]-L-tyrosyl-[protein] + diphosphate. In terms of biological role, probable antitoxin component of a putative type VII toxin-antitoxin (TA) system. Neutralizes cognate toxic MJ1216 by di-AMPylation. The chain is Putative protein adenylyltransferase MJ1217 from Methanocaldococcus jannaschii (strain ATCC 43067 / DSM 2661 / JAL-1 / JCM 10045 / NBRC 100440) (Methanococcus jannaschii).